We begin with the raw amino-acid sequence, 187 residues long: Ribosome-recycling factor (187 aa).

The interval 141-169 is disordered; the sequence is LKKGNKNGDFNDDEFHDLEKKVQNETDAG.

Belongs to the RRF family.

The protein resides in the cytoplasm. In terms of biological role, responsible for the release of ribosomes from messenger RNA at the termination of protein biosynthesis. May increase the efficiency of translation by recycling ribosomes from one round of translation to another. This Limosilactobacillus reuteri (strain DSM 20016) (Lactobacillus reuteri) protein is Ribosome-recycling factor.